Reading from the N-terminus, the 430-residue chain is 5-methylthioadenosine/S-adenosylhomocysteine deaminase (430 aa).

Zn(2+) is bound by residues histidine 59 and histidine 61. Glutamate 88 and histidine 181 together coordinate substrate. Histidine 208 provides a ligand contact to Zn(2+). 2 residues coordinate substrate: glutamate 211 and aspartate 296. Aspartate 296 is a binding site for Zn(2+).

The protein belongs to the metallo-dependent hydrolases superfamily. MTA/SAH deaminase family. The cofactor is Zn(2+).

The enzyme catalyses S-adenosyl-L-homocysteine + H2O + H(+) = S-inosyl-L-homocysteine + NH4(+). It catalyses the reaction S-methyl-5'-thioadenosine + H2O + H(+) = S-methyl-5'-thioinosine + NH4(+). In terms of biological role, catalyzes the deamination of 5-methylthioadenosine and S-adenosyl-L-homocysteine into 5-methylthioinosine and S-inosyl-L-homocysteine, respectively. Is also able to deaminate adenosine. The polypeptide is 5-methylthioadenosine/S-adenosylhomocysteine deaminase (Aquifex aeolicus (strain VF5)).